The primary structure comprises 105 residues: Guanidinium exporter (105 aa).

Residue Met1 is a topological domain, cytoplasmic. The helical transmembrane segment at 2-19 (SWIVLLIAGLLEVVWAIG) threads the bilayer. The Periplasmic portion of the chain corresponds to 20–28 (LKYTHGFTR). Residues 29–48 (LTPSIITIAAMIVSIAMLSW) form a helical membrane-spanning segment. Residues 49–54 (AMRTLP) lie on the Cytoplasmic side of the membrane. Residues 55–77 (VGTAYAVWTGIGAVGAAITGILL) form a helical membrane-spanning segment. Residues 78–86 (LGESASPAR) lie on the Periplasmic side of the membrane. The chain crosses the membrane as a helical span at residues 87-104 (LLSLGLIVAGIIGLKLST). His105 is a topological domain (cytoplasmic).

Belongs to the drug/metabolite transporter (DMT) superfamily. Small multidrug resistance (SMR) (TC 2.A.7.1) family. Gdx/SugE subfamily.

It localises to the cell inner membrane. In terms of biological role, guanidinium ion exporter. Couples guanidinium export to the proton motive force, exchanging one guanidinium ion for two protons. The polypeptide is Guanidinium exporter (Citrobacter freundii).